Here is a 531-residue protein sequence, read N- to C-terminus: Transmembrane protein 266 (531 aa).

Residues 1–102 (MALAASFNMT…VFLLSASLNS (102 aa)) are Cytoplasmic-facing. The helical transmembrane segment at 103–123 (FLVACVILVVILLTLELLIDI) threads the bilayer. The Extracellular portion of the chain corresponds to 124–129 (KLLQFS). Residues 130–150 (SAFQFAGVIHWISLVILSVFF) traverse the membrane as a helical segment. At 151-169 (SETVLRIVVLGIWDYIENK) the chain is on the cytoplasmic side. Residues 170–190 (IEVFDGAVIILSLAPMVASTV) form a helical membrane-spanning segment. Topologically, residues 191 to 199 (ANGPRSPWD) are extracellular. Residues 200–220 (AISLIIMLRIWRVKRVIDAYV) traverse the membrane as a helical segment. Topologically, residues 221-531 (LPVKLEMEMV…EQKLHRVPEA (311 aa)) are cytoplasmic. A coiled-coil region spans residues 231-251 (IQQYEKAKVIQDEQLERLTQI). The tract at residues 380–477 (NGTGATSESA…PAGSAQTSPE (98 aa)) is disordered. The segment covering 383–412 (GATSESASRSSVTRAQSDSSQTLGSSTDCS) has biased composition (polar residues). The span at 421–431 (EPGPSPLPLPP) shows a compositional bias: pro residues.

In terms of assembly, homodimer; disulfide-linked.

The protein localises to the cell membrane. It localises to the cell projection. The protein resides in the dendrite. It is found in the perikaryon. In terms of biological role, voltage-sensor protein present on the post-synaptic side of glutamatergic mossy fibers and granule cells in the cerebellum. Despite the presence of a voltage-sensor segment, does not form a functional ion channel and its precise role remains unclear. Undergoes both rapid and slow structural rearrangements in response to changes in voltage. Contains a zinc-binding site that can regulate the slow conformational transition. This Macaca fascicularis (Crab-eating macaque) protein is Transmembrane protein 266.